The chain runs to 80 residues: Myrmicitoxin(1)-Pr1a (80 aa).

An N-terminal signal peptide occupies residues 1-23; it reads MEIPKLLYIAVIAIGLSGSLTWA. Residues 24–57 constitute a propeptide that is removed on maturation; that stretch reads TPLANPLAEAEAEAKATAEATAEALAEALAEPEP. Residue Phe79 is modified to Phenylalanine amide.

Belongs to the formicidae venom clade 1 family. As to expression, expressed by the venom gland.

The protein resides in the secreted. Its function is as follows. Vertebrate-selective toxin that causes pain by targeting voltage-gated sodium channels. The protein is Myrmicitoxin(1)-Pr1a of Pogonomyrmex rugosus (Desert harvester ant).